We begin with the raw amino-acid sequence, 135 residues long: Photosystem II extrinsic protein U (135 aa).

An N-terminal signal peptide occupies residues 1 to 29 (MKRLLSWLTGALLMAGLLAGLILPGSVHA).

It belongs to the PsbU family. As to quaternary structure, PSII is composed of 1 copy each of membrane proteins PsbA, PsbB, PsbC, PsbD, PsbE, PsbF, PsbH, PsbI, PsbJ, PsbK, PsbL, PsbM, PsbT, PsbX, PsbY, Psb30/Ycf12, peripheral proteins PsbO, CyanoQ (PsbQ), PsbU, PsbV and a large number of cofactors. It forms dimeric complexes.

It localises to the cellular thylakoid membrane. Its function is as follows. One of the extrinsic, lumenal subunits of photosystem II (PSII). PSII is a light-driven water plastoquinone oxidoreductase, using light energy to abstract electrons from H(2)O, generating a proton gradient subsequently used for ATP formation. The extrinsic proteins stabilize the structure of photosystem II oxygen-evolving complex (OEC), the ion environment of oxygen evolution and protect the OEC against heat-induced inactivation. This chain is Photosystem II extrinsic protein U, found in Parasynechococcus marenigrum (strain WH8102).